The primary structure comprises 519 residues: Ribonuclease Y (519 aa).

A helical membrane pass occupies residues 3–23; that stretch reads LLSLLLILLGIILGVVVGYIV. The 61-residue stretch at 209–269 folds into the KH domain; sequence TVSVVNLPND…IRREIARTAL (61 aa). One can recognise an HD domain in the interval 335-428; the sequence is VLKHSIEVAH…VAAADALSAA (94 aa).

It belongs to the RNase Y family.

It is found in the cell membrane. Functionally, endoribonuclease that initiates mRNA decay. This is Ribonuclease Y from Staphylococcus epidermidis (strain ATCC 35984 / DSM 28319 / BCRC 17069 / CCUG 31568 / BM 3577 / RP62A).